Here is a 214-residue protein sequence, read N- to C-terminus: Adenylate kinase (214 aa).

10–15 (GAGKGT) is a binding site for ATP. The segment at 30 to 59 (STGDMLRAAIKAGSELGQKAKILMDMGQLV) is NMP. AMP is bound by residues T31, R36, 57–59 (QLV), 85–88 (GFPR), and Q92. An LID region spans residues 122-159 (GRRVHPASGRTYHIVYNPPKVEDKDDITGEDLILRADD). ATP-binding positions include R123 and 132–133 (TY). AMP-binding residues include R156 and R167. ATP is bound at residue Q200.

It belongs to the adenylate kinase family. Monomer.

The protein resides in the cytoplasm. The enzyme catalyses AMP + ATP = 2 ADP. The protein operates within purine metabolism; AMP biosynthesis via salvage pathway; AMP from ADP: step 1/1. Functionally, catalyzes the reversible transfer of the terminal phosphate group between ATP and AMP. Plays an important role in cellular energy homeostasis and in adenine nucleotide metabolism. The sequence is that of Adenylate kinase from Histophilus somni (strain 129Pt) (Haemophilus somnus).